We begin with the raw amino-acid sequence, 218 residues long: Large ribosomal subunit protein uL3 (218 aa).

Residue Gln153 is modified to N5-methylglutamine.

Belongs to the universal ribosomal protein uL3 family. In terms of assembly, part of the 50S ribosomal subunit. Forms a cluster with proteins L14 and L19. Methylated by PrmB.

In terms of biological role, one of the primary rRNA binding proteins, it binds directly near the 3'-end of the 23S rRNA, where it nucleates assembly of the 50S subunit. The sequence is that of Large ribosomal subunit protein uL3 from Alkalilimnicola ehrlichii (strain ATCC BAA-1101 / DSM 17681 / MLHE-1).